The primary structure comprises 877 residues: Telomere length regulation protein clk-2 (877 aa).

The span at 488–501 (NKDSAAITSKNNLR) shows a compositional bias: polar residues. The disordered stretch occupies residues 488–509 (NKDSAAITSKNNLRLDSDDDED).

This sequence belongs to the TEL2 family.

It localises to the nucleus. Its subcellular location is the chromosome. The protein localises to the telomere. In terms of biological role, DNA damage checkpoint protein required for DNA damage-induced cell cycle arrest and apoptosis, thereby playing a role in genome stability. Regulator of telomere length. This Caenorhabditis elegans protein is Telomere length regulation protein clk-2 (clk-2).